Reading from the N-terminus, the 66-residue chain is Large ribosomal subunit protein bL35 (66 aa).

It belongs to the bacterial ribosomal protein bL35 family.

The sequence is that of Large ribosomal subunit protein bL35 from Lysinibacillus sphaericus (strain C3-41).